A 168-amino-acid chain; its full sequence is Photosystem I assembly protein Ycf3 (168 aa).

TPR repeat units follow at residues 35–68 (AFTY…EIDP), 72–105 (SYIL…NPFL), and 120–153 (GEQA…TPGN).

Belongs to the Ycf3 family.

Its subcellular location is the plastid. It is found in the chloroplast thylakoid membrane. Its function is as follows. Essential for the assembly of the photosystem I (PSI) complex. May act as a chaperone-like factor to guide the assembly of the PSI subunits. This chain is Photosystem I assembly protein Ycf3, found in Acorus calamus var. americanus (American sweet flag).